A 454-amino-acid chain; its full sequence is tRNA modification GTPase MnmE (454 aa).

Residues R23, E80, and K120 each contribute to the (6S)-5-formyl-5,6,7,8-tetrahydrofolate site. The TrmE-type G domain maps to 216–377; sequence GMKVVIAGRP…LRNHLKQSMG (162 aa). Residue N226 participates in K(+) binding. GTP is bound by residues 226 to 231, 245 to 251, 270 to 273, 335 to 338, and 358 to 360; these read NAGKSS, TDIAGTT, DTAG, NKAD, and SAR. Position 230 (S230) interacts with Mg(2+). Positions 245, 247, and 250 each coordinate K(+). T251 contacts Mg(2+). K454 is a (6S)-5-formyl-5,6,7,8-tetrahydrofolate binding site.

Belongs to the TRAFAC class TrmE-Era-EngA-EngB-Septin-like GTPase superfamily. TrmE GTPase family. Homodimer. Heterotetramer of two MnmE and two MnmG subunits. The cofactor is K(+).

The protein resides in the cytoplasm. Exhibits a very high intrinsic GTPase hydrolysis rate. Involved in the addition of a carboxymethylaminomethyl (cmnm) group at the wobble position (U34) of certain tRNAs, forming tRNA-cmnm(5)s(2)U34. This Escherichia coli (strain SMS-3-5 / SECEC) protein is tRNA modification GTPase MnmE.